The sequence spans 316 residues: MLVVEVANGRSLVWGAEAVQALRERLGVGGRTVGALPRGPRQNSRLGLPLLLLPEEARLLAEIGAVTLVSAPRPDPRNHGLALASFKRQQEQSFQDQNTLAAEARETRRQELLEKIVEGQAAKKQKLEQDSGADEGGQEAGGSEATQGSETSDDGQPSAEQEGAAPSLDSSSPQPGPSNGVTPLPRSALLIQLATARPRPVKAKPLDWRVQSKDWPHAGRPAHELRYSIYRDLWERGFFLSAAGKFGGDFLVYPGDPLRFHAHYIAQCWSAEDPIPLQDLVSAGRLGTSVRKTLLLCSPQPDGKVVYTSLQWASLQ.

The segment at 120-184 is disordered; sequence QAAKKQKLEQ…PGPSNGVTPL (65 aa). 2 stretches are compositionally biased toward polar residues: residues 144 to 159 and 168 to 181; these read EATQGSETSDDGQPSA and LDSSSPQPGPSNGV. Catalysis depends on residues Y253, H261, and K292.

The protein belongs to the tRNA-intron endonuclease family. TRNA splicing endonuclease is a heterotetramer composed of TSEN2, TSEN15, TSEN34/LENG5 and TSEN54. tRNA splicing endonuclease complex also contains proteins of the pre-mRNA 3'-end processing machinery such as CLP1, CPSF1, CPSF4 and CSTF2.

Its subcellular location is the nucleus. The protein resides in the nucleolus. The enzyme catalyses pretRNA = a 3'-half-tRNA molecule with a 5'-OH end + a 5'-half-tRNA molecule with a 2',3'-cyclic phosphate end + an intron with a 2',3'-cyclic phosphate and a 5'-hydroxyl terminus.. Constitutes one of the two catalytic subunit of the tRNA-splicing endonuclease complex, a complex responsible for identification and cleavage of the splice sites in pre-tRNA. It cleaves pre-tRNA at the 5'- and 3'-splice sites to release the intron. The products are an intron and two tRNA half-molecules bearing 2',3'-cyclic phosphate and 5'-OH termini. There are no conserved sequences at the splice sites, but the intron is invariably located at the same site in the gene, placing the splice sites an invariant distance from the constant structural features of the tRNA body. The tRNA splicing endonuclease is also involved in mRNA processing via its association with pre-mRNA 3'-end processing factors, establishing a link between pre-tRNA splicing and pre-mRNA 3'-end formation, suggesting that the endonuclease subunits function in multiple RNA-processing events. The protein is tRNA-splicing endonuclease subunit Sen34 (Tsen34) of Mus musculus (Mouse).